The following is a 490-amino-acid chain: Betaine aldehyde dehydrogenase (490 aa).

Residues Thr-26, Ile-27, and Asp-93 each coordinate K(+). 150–152 is a binding site for NAD(+); the sequence is GAW. Lys-162 functions as the Charge relay system in the catalytic mechanism. 176-179 contributes to the NAD(+) binding site; it reads KPSE. Val-180 serves as a coordination point for K(+). 230-233 is an NAD(+) binding site; sequence GVAS. A K(+)-binding site is contributed by Leu-246. The active-site Proton acceptor is Glu-252. Residues Gly-254, Cys-286, and Glu-387 each contribute to the NAD(+) site. The Nucleophile role is filled by Cys-286. A Cysteine sulfenic acid (-SOH) modification is found at Cys-286. Positions 457 and 460 each coordinate K(+). Glu-464 serves as the catalytic Charge relay system.

Belongs to the aldehyde dehydrogenase family. Dimer of dimers. K(+) is required as a cofactor.

The catalysed reaction is betaine aldehyde + NAD(+) + H2O = glycine betaine + NADH + 2 H(+). It functions in the pathway amine and polyamine biosynthesis; betaine biosynthesis via choline pathway; betaine from betaine aldehyde: step 1/1. Its function is as follows. Involved in the biosynthesis of the osmoprotectant glycine betaine. Catalyzes the irreversible oxidation of betaine aldehyde to the corresponding acid. The polypeptide is Betaine aldehyde dehydrogenase (Escherichia coli O8 (strain IAI1)).